Reading from the N-terminus, the 311-residue chain is Malate dehydrogenase (311 aa).

NAD(+) is bound at residue 10–15 (GAGHTG). Arginine 85 and arginine 91 together coordinate substrate. NAD(+) is bound by residues asparagine 98 and 121–123 (LTN). Substrate-binding residues include asparagine 123 and arginine 154. Histidine 178 (proton acceptor) is an active-site residue.

The protein belongs to the LDH/MDH superfamily. MDH type 3 family.

It carries out the reaction (S)-malate + NAD(+) = oxaloacetate + NADH + H(+). Catalyzes the reversible oxidation of malate to oxaloacetate. The chain is Malate dehydrogenase from Staphylococcus carnosus (strain TM300).